The sequence spans 183 residues: dTTP/UTP pyrophosphatase (183 aa).

The active-site Proton acceptor is the D64.

This sequence belongs to the Maf family. YhdE subfamily. The cofactor is a divalent metal cation.

The protein resides in the cytoplasm. It catalyses the reaction dTTP + H2O = dTMP + diphosphate + H(+). The catalysed reaction is UTP + H2O = UMP + diphosphate + H(+). Nucleoside triphosphate pyrophosphatase that hydrolyzes dTTP and UTP. May have a dual role in cell division arrest and in preventing the incorporation of modified nucleotides into cellular nucleic acids. This is dTTP/UTP pyrophosphatase from Acinetobacter baylyi (strain ATCC 33305 / BD413 / ADP1).